A 152-amino-acid polypeptide reads, in one-letter code: Aspartate carbamoyltransferase regulatory chain (152 aa).

Positions 108, 113, 137, and 140 each coordinate Zn(2+).

Belongs to the PyrI family. As to quaternary structure, contains catalytic and regulatory chains. Zn(2+) serves as cofactor.

Involved in allosteric regulation of aspartate carbamoyltransferase. The chain is Aspartate carbamoyltransferase regulatory chain from Neisseria meningitidis serogroup A / serotype 4A (strain DSM 15465 / Z2491).